Consider the following 462-residue polypeptide: Putative E3 ubiquitin-protein ligase XBAT35 (462 aa).

3 ANK repeats span residues 6-35 (SKGE…DLEW), 39-69 (EGKT…NVNA), and 75-104 (HAGT…NPLV). Disordered stretches follow at residues 277–341 (HPPV…GKAS) and 356–402 (SSPS…EGER). Positions 304–317 (SLHTTMSDPSNLNH) are enriched in polar residues. Positions 319 to 341 (SIGQASSSSGPSSSTAPPSGKAS) are enriched in low complexity. Residues 411 to 450 (CAICLDAPSEAVCVPCGHVAGCMSCLKEIKSKNWGCPVCR) form an RING-type zinc finger.

It carries out the reaction S-ubiquitinyl-[E2 ubiquitin-conjugating enzyme]-L-cysteine + [acceptor protein]-L-lysine = [E2 ubiquitin-conjugating enzyme]-L-cysteine + N(6)-ubiquitinyl-[acceptor protein]-L-lysine.. The protein operates within protein modification; protein ubiquitination. Functionally, no E3 ubiquitin-protein ligase activity observed when associated with the E2 enzyme UBC8 in vitro. The protein is Putative E3 ubiquitin-protein ligase XBAT35 (XBAT35) of Arabidopsis thaliana (Mouse-ear cress).